The chain runs to 67 residues: Systemic RNA interference defective protein 5 (67 aa).

Over Met1–Asp18 the chain is Extracellular. The chain crosses the membrane as a helical span at residues Ile19–Asn39. Over Arg40–Asp67 the chain is Cytoplasmic.

In terms of tissue distribution, ubiquitously present in most tissues tested. Expressed in the somatic cells of intestine, muscle, neurons, somatic gonad and embryos but not in the germline (at protein level).

It localises to the late endosome membrane. Its function is as follows. Plays a role in RNA-mediated gene silencing by mediating transport of both ingested and endogenous dsRNA between cells. Not required for the uptake of dsRNA from the intestinal lumen. In Caenorhabditis elegans, this protein is Systemic RNA interference defective protein 5.